We begin with the raw amino-acid sequence, 106 residues long: uncharacterized protein (106 aa).

The next 4 membrane-spanning stretches (helical) occupy residues 3-23 (WFLL…MKYI), 29-49 (KWPI…LSQA), 50-70 (MIVL…SIGV), and 82-102 (FQLS…GLRL).

It belongs to the drug/metabolite transporter (DMT) superfamily. Small multidrug resistance (SMR) (TC 2.A.7.1) family.

The protein resides in the cell membrane. This is an uncharacterized protein from Bacillus subtilis (strain 168).